The primary structure comprises 117 residues: Nascent polypeptide-associated complex protein (117 aa).

The 69-residue stretch at 9-77 folds into the NAC-A/B domain; the sequence is PKQLKQMQRA…ARECDLEAEV (69 aa).

The protein belongs to the NAC-alpha family. As to quaternary structure, homodimer. Interacts with the ribosome. Binds ribosomal RNA.

Its function is as follows. Contacts the emerging nascent chain on the ribosome. This Methanothermobacter marburgensis (strain ATCC BAA-927 / DSM 2133 / JCM 14651 / NBRC 100331 / OCM 82 / Marburg) (Methanobacterium thermoautotrophicum) protein is Nascent polypeptide-associated complex protein.